The primary structure comprises 231 residues: 2-phospho-L-lactate guanylyltransferase (231 aa).

It belongs to the CofC family. As to quaternary structure, homodimer.

The catalysed reaction is (2S)-2-phospholactate + GTP + H(+) = (2S)-lactyl-2-diphospho-5'-guanosine + diphosphate. The protein operates within cofactor biosynthesis; coenzyme F420 biosynthesis. Functionally, guanylyltransferase that catalyzes the activation of (2S)-2-phospholactate (2-PL) as (2S)-lactyl-2-diphospho-5'-guanosine, via the condensation of 2-PL with GTP. It is involved in the biosynthesis of coenzyme F420, a hydride carrier cofactor. This chain is 2-phospho-L-lactate guanylyltransferase, found in Haloterrigena turkmenica (strain ATCC 51198 / DSM 5511 / JCM 9101 / NCIMB 13204 / VKM B-1734 / 4k) (Halococcus turkmenicus).